The primary structure comprises 201 residues: Protein GrpE (201 aa).

The protein belongs to the GrpE family. As to quaternary structure, homodimer.

The protein localises to the cytoplasm. Its function is as follows. Participates actively in the response to hyperosmotic and heat shock by preventing the aggregation of stress-denatured proteins, in association with DnaK and GrpE. It is the nucleotide exchange factor for DnaK and may function as a thermosensor. Unfolded proteins bind initially to DnaJ; upon interaction with the DnaJ-bound protein, DnaK hydrolyzes its bound ATP, resulting in the formation of a stable complex. GrpE releases ADP from DnaK; ATP binding to DnaK triggers the release of the substrate protein, thus completing the reaction cycle. Several rounds of ATP-dependent interactions between DnaJ, DnaK and GrpE are required for fully efficient folding. In Shewanella frigidimarina (strain NCIMB 400), this protein is Protein GrpE.